The following is a 406-amino-acid chain: MSALGAVIALLLWGQLFAVDSGNDVTDIADDGCPKPPEIAHGYVEHSVRYQCKNYYKLRTEGDGVYTLNDKKQWINKAVGDKLPECEADDGCPKPPEIAHGYVEHSVRYQCKNYYKLRTEGDGVYTLNNEKQWINKAVGDKLPECEAVCGKPKNPANPVQRILGGHLDAKGSFPWQAKMVSHHNLTTGATLINEQWLLTTAKNLFLNHSENATAKDIAPTLTLYVGKKQLVEIEKVVLHPNYSQVDIGLIKLKQKVSVNERVMPICLPSKDYAEVGRVGYVSGWGRNANFKFTDHLKYVMLPVADQDQCIRHYEGSTVPEKKTPKSPVGVQPILNEHTFCAGMSKYQEDTCYGDAGSAFAVHDLEEDTWYATGILSFDKSCAVAEYGVYVKVTSIQDWVQKTIAEN.

The signal sequence occupies residues 1-18; sequence MSALGAVIALLLWGQLFA. Sushi domains follow at residues 31–88 and 90–147; these read DGCP…ECEA. 5 disulfides stabilise this stretch: Cys52/Cys86, Cys111/Cys145, Cys149/Cys266, Cys309/Cys340, and Cys351/Cys381. A Peptidase S1 domain is found at 162 to 404; the sequence is ILGGHLDAKG…IQDWVQKTIA (243 aa). Asn184 carries N-linked (GlcNAc...) (complex) asparagine glycosylation. 2 N-linked (GlcNAc...) asparagine glycosylation sites follow: Asn207 and Asn211. Asn241 is a glycosylation site (N-linked (GlcNAc...) (complex) asparagine). The tract at residues 318–323 is interaction with CD163; that stretch reads VPEKKT.

This sequence belongs to the peptidase S1 family. Tetramer of two alpha and two beta chains; disulfide-linked. The hemoglobin/haptoglobin complex is composed of a haptoglobin dimer bound to two hemoglobin alpha-beta dimers. Interacts with CD163. Interacts with ERGIC3. Expressed by the liver and secreted in plasma.

It is found in the secreted. As a result of hemolysis, hemoglobin is found to accumulate in the kidney and is secreted in the urine. Haptoglobin captures, and combines with free plasma hemoglobin to allow hepatic recycling of heme iron and to prevent kidney damage. Haptoglobin also acts as an antioxidant, has antibacterial activity, and plays a role in modulating many aspects of the acute phase response. Hemoglobin/haptoglobin complexes are rapidly cleared by the macrophage CD163 scavenger receptor expressed on the surface of liver Kupfer cells through an endocytic lysosomal degradation pathway. Functionally, the uncleaved form of allele alpha-2 (2-2), known as zonulin, plays a role in intestinal permeability, allowing intercellular tight junction disassembly, and controlling the equilibrium between tolerance and immunity to non-self antigens. This is Haptoglobin (HP) from Homo sapiens (Human).